A 151-amino-acid chain; its full sequence is UPF0208 membrane protein YfbV (151 aa).

2 helical membrane passes run 46–65 (YAIR…QIAL) and 69–91 (LGPA…WWLG).

This sequence belongs to the UPF0208 family.

It localises to the cell inner membrane. This is UPF0208 membrane protein YfbV from Salmonella choleraesuis (strain SC-B67).